The primary structure comprises 208 residues: V-type ATP synthase subunit D (208 aa).

Belongs to the V-ATPase D subunit family.

Produces ATP from ADP in the presence of a proton gradient across the membrane. The protein is V-type ATP synthase subunit D of Chlamydia felis (strain Fe/C-56) (Chlamydophila felis).